An 81-amino-acid polypeptide reads, in one-letter code: Large ribosomal subunit protein bL28 (81 aa).

This sequence belongs to the bacterial ribosomal protein bL28 family. As to quaternary structure, part of the 50S ribosomal subunit.

The chain is Large ribosomal subunit protein bL28 from Deinococcus radiodurans (strain ATCC 13939 / DSM 20539 / JCM 16871 / CCUG 27074 / LMG 4051 / NBRC 15346 / NCIMB 9279 / VKM B-1422 / R1).